The primary structure comprises 413 residues: Gamma-glutamyl phosphate reductase (413 aa).

Belongs to the gamma-glutamyl phosphate reductase family.

It localises to the cytoplasm. It carries out the reaction L-glutamate 5-semialdehyde + phosphate + NADP(+) = L-glutamyl 5-phosphate + NADPH + H(+). Its pathway is amino-acid biosynthesis; L-proline biosynthesis; L-glutamate 5-semialdehyde from L-glutamate: step 2/2. In terms of biological role, catalyzes the NADPH-dependent reduction of L-glutamate 5-phosphate into L-glutamate 5-semialdehyde and phosphate. The product spontaneously undergoes cyclization to form 1-pyrroline-5-carboxylate. This Salinispora arenicola (strain CNS-205) protein is Gamma-glutamyl phosphate reductase.